Reading from the N-terminus, the 146-residue chain is Kappa-casein (146 aa).

T107, T112, and T118 each carry an O-linked (GalNAc...) threonine glycan. S143 bears the Phosphoserine mark.

This sequence belongs to the kappa-casein family. Mammary gland specific. Secreted in milk.

It is found in the secreted. Kappa-casein stabilizes micelle formation, preventing casein precipitation in milk. The protein is Kappa-casein (CSN3) of Dicotyles tajacu (Collared peccary).